Reading from the N-terminus, the 490-residue chain is Bifunctional pantoate ligase/cytidylate kinase (490 aa).

Residue 1–8 (MGGLHQGH) coordinates ATP. A pantoate--beta-alanine ligase region spans residues 1 to 253 (MGGLHQGHAR…CGETRLIDHV (253 aa)). Catalysis depends on H8, which acts as the Proton donor. Q35 provides a ligand contact to (R)-pantoate. Residue Q35 participates in beta-alanine binding. 124–127 (GEKD) contributes to the ATP binding site. (R)-pantoate is bound at residue Q130. ATP is bound by residues V153 and 161-164 (ASSR). Residues 254-490 (FIMTRSPIVA…AKEIWPTPQG (237 aa)) form a cytidylate kinase region.

In the N-terminal section; belongs to the pantothenate synthetase family. The protein in the C-terminal section; belongs to the cytidylate kinase family. Type 1 subfamily.

It is found in the cytoplasm. The catalysed reaction is (R)-pantoate + beta-alanine + ATP = (R)-pantothenate + AMP + diphosphate + H(+). The enzyme catalyses CMP + ATP = CDP + ADP. It carries out the reaction dCMP + ATP = dCDP + ADP. It functions in the pathway cofactor biosynthesis; (R)-pantothenate biosynthesis; (R)-pantothenate from (R)-pantoate and beta-alanine: step 1/1. Its function is as follows. Catalyzes the condensation of pantoate with beta-alanine in an ATP-dependent reaction via a pantoyl-adenylate intermediate. Catalyzes the transfer of a phosphate group from ATP to either CMP or dCMP to form CDP or dCDP and ADP, respectively. This chain is Bifunctional pantoate ligase/cytidylate kinase, found in Synechococcus sp. (strain WH7803).